A 119-amino-acid polypeptide reads, in one-letter code: uncharacterized protein (119 aa).

Residues 1 to 23 form the signal peptide; that stretch reads MVKWAVSILVNALLLIVIDGYID. The next 3 helical transmembrane spans lie at 27 to 47, 50 to 70, and 88 to 108; these read ISSI…NVLI, LLII…LFVI, and IDGF…HLLI.

It is found in the cell membrane. This is an uncharacterized protein from Bacillus subtilis (strain 168).